The chain runs to 722 residues: Dipeptidyl aminopeptidase BII (722 aa).

An N-terminal signal peptide occupies residues 1 to 24 (MRPNLLAAAIAVPLSLLAAQIAQA). Disulfide bonds link Cys70-Cys87 and Cys166-Cys174. His86 acts as the Charge relay system in catalysis. Substrate is bound at residue 215 to 216 (NW). The Charge relay system role is filled by Asp224. Substrate contacts are provided by residues Asn330, 655–657 (GNS), and 673–674 (FD). The active-site Charge relay system is the Ser657.

The protein belongs to the peptidase S46 family. Homodimer.

Its activity is regulated as follows. Completely inhibited by the serine protease inhibitor diisopropyl fluorophosphate (DFP) and potently inhibited by 0.5 mM ZnCl(2), 10 mM o-phenanthlorine, phenylmethanesulfonyl fluoride (PMSF) and N-tosyl-L-phenyl-alanyl chloromethyl ketone (TPCK), but not by N-tosyl-L-lysyl chloromethyl ketone (TLCK). Activity is not affected significantly by protease inhibitors, such as chymostatin, leupeptin, N-ethylmaleimide (NEM), iodoacetate (IAA), L-trans-epoxysuccinyl-leucylamido(4-guanido)butane (E64) and pepstatin A or by CoCl(2), CaCl(2) and EDTA. Exopeptidase that catalyzes the removal of dipeptide units (NH2-P2-P1-) from the free amino termini of oligopeptides and small proteins. Peptide digestion is sequential and substrate recognition is non-specific, with the exception that Pro is not suitable as a P1 residue. Removes many residues of bioactive oligopeptides such as angiotensin I and neuromedin N and also cleaves oxidized insulin B chain. Able to hydrolyze an X-Pro bond, an imido bond. No endopeptidase activity. May play a physiological role in feeding. This Pseudoxanthomonas mexicana protein is Dipeptidyl aminopeptidase BII.